Reading from the N-terminus, the 288-residue chain is Undecaprenyl-diphosphatase (288 aa).

8 helical membrane passes run 25 to 45 (GITE…NEFL), 53 to 73 (FIDM…MVIY), 93 to 113 (WKLW…GLLL), 121 to 141 (LSNF…FIWI), 171 to 191 (VLSI…GIIV), 196 to 216 (SVAA…YSGL), 231 to 251 (GQAA…LFVI), and 263 to 283 (FTVF…YGAV).

This sequence belongs to the UppP family.

The protein resides in the cell membrane. The enzyme catalyses di-trans,octa-cis-undecaprenyl diphosphate + H2O = di-trans,octa-cis-undecaprenyl phosphate + phosphate + H(+). Functionally, catalyzes the dephosphorylation of undecaprenyl diphosphate (UPP). Confers resistance to bacitracin. The chain is Undecaprenyl-diphosphatase from Streptococcus thermophilus (strain CNRZ 1066).